A 603-amino-acid polypeptide reads, in one-letter code: Penicillin-binding protein activator LpoA (603 aa).

The N-terminal stretch at 1 to 26 (MANMTPRKNSVTRLIAPVALALTLAA) is a signal peptide. The N-palmitoyl cysteine moiety is linked to residue C27. The S-diacylglycerol cysteine moiety is linked to residue C27.

The protein belongs to the LpoA family. In terms of assembly, interacts with PBP1a.

It localises to the cell outer membrane. In terms of biological role, regulator of peptidoglycan synthesis that is essential for the function of penicillin-binding protein 1A (PBP1a). The protein is Penicillin-binding protein activator LpoA of Aliivibrio fischeri (strain ATCC 700601 / ES114) (Vibrio fischeri).